We begin with the raw amino-acid sequence, 145 residues long: Trafficking protein particle complex subunit 1 (145 aa).

Belongs to the TRAPP small subunits family. BET5 subfamily. In terms of assembly, part of the multisubunit transport protein particle (TRAPP) complex. The heterodimer TRAPPC6B-TRAPPC3 interacts with TRAPPC1 likely providing a core for TRAPP complex formation.

It is found in the golgi apparatus. Its subcellular location is the cis-Golgi network. The protein resides in the endoplasmic reticulum. Its function is as follows. May play a role in vesicular transport from endoplasmic reticulum to Golgi. This is Trafficking protein particle complex subunit 1 (TRAPPC1) from Bos taurus (Bovine).